A 334-amino-acid polypeptide reads, in one-letter code: Glyceraldehyde-3-phosphate dehydrogenase (334 aa).

NAD(+)-binding positions include 12-13 (TI) and glycine 111. 140 to 142 (SCN) provides a ligand contact to D-glyceraldehyde 3-phosphate. The Nucleophile role is filled by cysteine 141. Position 167 (arginine 167) interacts with NAD(+). 192 to 193 (HG) is a D-glyceraldehyde 3-phosphate binding site. Glutamine 298 lines the NAD(+) pocket.

It belongs to the glyceraldehyde-3-phosphate dehydrogenase family. Homotetramer.

The protein resides in the cytoplasm. It catalyses the reaction D-glyceraldehyde 3-phosphate + phosphate + NADP(+) = (2R)-3-phospho-glyceroyl phosphate + NADPH + H(+). It carries out the reaction D-glyceraldehyde 3-phosphate + phosphate + NAD(+) = (2R)-3-phospho-glyceroyl phosphate + NADH + H(+). It participates in carbohydrate degradation; glycolysis; pyruvate from D-glyceraldehyde 3-phosphate: step 1/5. In Pyrococcus abyssi (strain GE5 / Orsay), this protein is Glyceraldehyde-3-phosphate dehydrogenase (gap).